We begin with the raw amino-acid sequence, 480 residues long: Sestrin-2 (480 aa).

Met-1 bears the N-acetylmethionine mark. Residues 20 to 43 (RGGVAGPETREEHREGQARRGSRG) form a disordered region. Positions 27 to 37 (ETREEHREGQA) are enriched in basic and acidic residues. An N-terminal domain; mediates the alkylhydroperoxide reductase activity region spans residues 66–239 (GLEALMSSGR…APSPPSEQGT (174 aa)). Residue Cys-125 is the Cysteine sulfenic acid (-SOH) intermediate of the active site. Lys-175 participates in a covalent cross-link: Glycyl lysine isopeptide (Lys-Gly) (interchain with G-Cter in ubiquitin). Disordered regions lie at residues 221 to 251 (DAEGSPASQAPSPPSEQGTPPSGDPLNNSGG) and 272 to 291 (LLRDEGASQEEMENRFELEK). Positions 223 to 238 (EGSPASQAPSPPSEQG) are enriched in low complexity. Ser-249 bears the Phosphoserine mark. The C-terminal domain; mediates TORC1 regulation stretch occupies residues 308–480 (PHPDILCFVE…ALRAITRYMT (173 aa)). L-leucine is bound by residues 374-377 (TYNT), Thr-386, and Glu-451.

Belongs to the sestrin family. Interacts with the GATOR2 complex which is composed of MIOS, SEC13, SEH1L, WDR24 and WDR59; the interaction is negatively regulated by leucine. Conveys leucine availability via direct interaction with SEH1L and WDR24 components of the GATOR2 complex. Interacts with RRAGA, RRAGB, RRAGC and RRAGD; may function as a guanine nucleotide dissociation inhibitor for RRAGs and regulate them. May interact with the TORC2 complex. Interacts with KEAP1, RBX1, SQSTM and ULK1; to regulate the degradation of KEAP1. May also associate with the complex composed of TSC1, TSC2 and the AMP-responsive protein kinase/AMPK to regulate TORC1 signaling. May interact with PRDX1. Post-translationally, phosphorylated by ULK1 at multiple sites. Ubiquitinated at Lys-175 by RNF167 via 'Lys-63'-linked polyubiquitination in response to leucine deprivation: ubiquitination promotes SESN2-interaction with the GATOR2 complex, leading to inhibit the TORC1 signaling pathway. Deubiquitinated at Lys-175 by STAMBPL1, promoting the TORC1 signaling pathway. Ubiquitinated by RNF186; ubiquitination mediates proteasomal degradation. In terms of tissue distribution, detected in heart, liver and skeletal muscles (at protein level).

It is found in the cytoplasm. The catalysed reaction is a hydroperoxide + L-cysteinyl-[protein] = S-hydroxy-L-cysteinyl-[protein] + an alcohol. Functions as an intracellular leucine sensor that negatively regulates the mTORC1 signaling pathway through the GATOR complex. In absence of leucine, binds the GATOR subcomplex GATOR2 and prevents mTORC1 signaling. Binding of leucine to SESN2 disrupts its interaction with GATOR2 thereby activating the TORC1 signaling pathway. This stress-inducible metabolic regulator also plays a role in protection against oxidative and genotoxic stresses. May negatively regulate protein translation in response to endoplasmic reticulum stress, via mTORC1. May positively regulate the transcription by NFE2L2 of genes involved in the response to oxidative stress by facilitating the SQSTM1-mediated autophagic degradation of KEAP1. May also mediate TP53 inhibition of TORC1 signaling upon genotoxic stress. Moreover, may prevent the accumulation of reactive oxygen species (ROS) through the alkylhydroperoxide reductase activity born by the N-terminal domain of the protein. Was originally reported to contribute to oxidative stress resistance by reducing PRDX1. However, this could not be confirmed. This chain is Sestrin-2, found in Mus musculus (Mouse).